Consider the following 526-residue polypeptide: ATP synthase subunit alpha (526 aa).

Residue 171–178 (GDRQTGKT) participates in ATP binding.

It belongs to the ATPase alpha/beta chains family. F-type ATPases have 2 components, CF(1) - the catalytic core - and CF(0) - the membrane proton channel. CF(1) has five subunits: alpha(3), beta(3), gamma(1), delta(1), epsilon(1). CF(0) has four main subunits: a, b, b' and c.

The protein localises to the cell inner membrane. The enzyme catalyses ATP + H2O + 4 H(+)(in) = ADP + phosphate + 5 H(+)(out). In terms of biological role, produces ATP from ADP in the presence of a proton gradient across the membrane. The alpha chain is a regulatory subunit. The protein is ATP synthase subunit alpha of Pelodictyon phaeoclathratiforme (strain DSM 5477 / BU-1).